Reading from the N-terminus, the 297-residue chain is Large ribosomal subunit protein uL18 (297 aa).

The segment covering Lys258–Thr267 has biased composition (basic residues). The segment at Lys258–Gln277 is disordered. The segment covering Glu268 to Gln277 has biased composition (basic and acidic residues).

This sequence belongs to the universal ribosomal protein uL18 family. In terms of assembly, component of the large ribosomal subunit (LSU).

It localises to the cytoplasm. Its subcellular location is the nucleus. Its function is as follows. Component of the ribosome, a large ribonucleoprotein complex responsible for the synthesis of proteins in the cell. The small ribosomal subunit (SSU) binds messenger RNAs (mRNAs) and translates the encoded message by selecting cognate aminoacyl-transfer RNA (tRNA) molecules. The large subunit (LSU) contains the ribosomal catalytic site termed the peptidyl transferase center (PTC), which catalyzes the formation of peptide bonds, thereby polymerizing the amino acids delivered by tRNAs into a polypeptide chain. The nascent polypeptides leave the ribosome through a tunnel in the LSU and interact with protein factors that function in enzymatic processing, targeting, and the membrane insertion of nascent chains at the exit of the ribosomal tunnel. The protein is Large ribosomal subunit protein uL18 (RPL5A) of Helianthus annuus (Common sunflower).